A 495-amino-acid polypeptide reads, in one-letter code: MTHILAIDQGTTSSRAIIFDASMNITASAQEEFAQHYPDSGWVEHDPGDLWATTAGTCRAAIEKAGLKPEDIAAIGITNQRETVVVWDKTSGQPVYNAIVWQDRRTAAYCKTLRDEGHDKMITARTGLLADPYFSATKLKWILDNVEGARDRATRGELLFGTVDTFLIWKLTGGAAHVTDATNAARTSLYDIHKGRWSQTICALFDIPQQMLPEVKDCAADFGVTRSDLFGRPVPILGVAGDQQAATIGQACFEPGMLKSTYGTGCFALLNTGDTAVASSNRLLTTIAYQFDGKPTYALEGSIFVAGAVVQWLRDGLQTIRKASETQAMAERADPNQNVVLVPAFVGLGAPYWDAECRGAVFGLTRNSGPDEFARAALESVGYQTRDLLDAMTADWQGSDVRATLRVDGGMSASDWAMQFLSDIIDAPVDRPKVLETTALGAAWLAGQRAGLYPDQAGFAASWALEKTFAPQMDAALRDRKYAAWKRAVDATLRF.

Threonine 11 provides a ligand contact to ADP. Residues threonine 11, threonine 12, and serine 13 each contribute to the ATP site. Sn-glycerol 3-phosphate is bound at residue threonine 11. An ADP-binding site is contributed by arginine 15. Residues arginine 81, glutamate 82, tyrosine 133, and aspartate 242 each contribute to the sn-glycerol 3-phosphate site. 5 residues coordinate glycerol: arginine 81, glutamate 82, tyrosine 133, aspartate 242, and glutamine 243. 2 residues coordinate ADP: threonine 264 and glycine 307. ATP-binding residues include threonine 264, glycine 307, glutamine 311, and glycine 410. Glycine 410 is a binding site for ADP.

The protein belongs to the FGGY kinase family.

The enzyme catalyses glycerol + ATP = sn-glycerol 3-phosphate + ADP + H(+). Its pathway is polyol metabolism; glycerol degradation via glycerol kinase pathway; sn-glycerol 3-phosphate from glycerol: step 1/1. With respect to regulation, inhibited by fructose 1,6-bisphosphate (FBP). Its function is as follows. Key enzyme in the regulation of glycerol uptake and metabolism. Catalyzes the phosphorylation of glycerol to yield sn-glycerol 3-phosphate. The protein is Glycerol kinase of Roseobacter denitrificans (strain ATCC 33942 / OCh 114) (Erythrobacter sp. (strain OCh 114)).